The following is a 739-amino-acid chain: Nucleoprotein (739 aa).

A coiled-coil region spans residues 334–363 (VNVGEQYQQLREAATEAEKQLQQYAESREL). Disordered stretches follow at residues 414 to 475 (RPNL…YHDD) and 498 to 642 (FELQ…IGQS). The span at 570–579 (TPIDQGDDDP) shows a compositional bias: acidic residues. Residues 614–624 (AEAHEPPHKSS) are compositionally biased toward basic and acidic residues. Polar residues predominate over residues 625–634 (NEPAETSQLN).

It belongs to the filoviruses nucleoprotein family. Homooligomer. Homomultimerizes to form the nucleocapsid. Binds to viral genomic RNA. Interacts with VP35 and VP30 to form the nucleocapsid. Interacts with host PPP2R5C; this interaction leads to VP30 dephosphorylation and viral transcription. Interacts with VP24; this interaction facilitates nucleocapsid assembly and genome packaging. Interacts with matrix protein VP40; this interaction allows recruitment of the nucleocapsid into progeny virions. Interacts with host STAU1. Interacts with host NXF1 (via RNA-binding domain); this interaction recruits NXF1 to the inclusion bodies were viral replication takes place, probably to export viral mRNA-NXF1 complexes from these sites. Interacts with host CCDC92; this interaction sequesters NP in the host cytoplasm. Interacts with host TRIM14. Phosphorylated and O-glycosylated by host. Acetylated by host EP300 in vitro.

The protein resides in the virion. It is found in the host cytoplasm. Oligomerizes into helical capsid to encapsidate the viral genome, protecting it from nucleases and the cellular innate immune response. VP35 binds to and stabilizes monomeric NP, keeping it soluble. Upon virus replication, NP is recruited to bind cooperatively viral genomic RNA and VP35 is released. The encapsidated genomic RNA is termed the nucleocapsid and serves as template for transcription and replication. The nucleocapsid is helical with a pitch of 10.81 NP per turn and a diameter of about 22nm. Each NP binds to six nucleotides of viral genomic RNA, three being exposed to the solvant and three hidden into the nucleocapsid. Also recruits host PPP2R5C phosphatase to dephosphorylate VP30 and thereby promote viral transcription. Upon virion assembly and budding, NP binds to VP24 and possibly host STAU1. This chain is Nucleoprotein (NP), found in Homo sapiens (Human).